Here is a 469-residue protein sequence, read N- to C-terminus: tRNA(Ile)-lysidine synthase (469 aa).

An ATP-binding site is contributed by 26 to 31 (SGGPDS).

It belongs to the tRNA(Ile)-lysidine synthase family.

It is found in the cytoplasm. It catalyses the reaction cytidine(34) in tRNA(Ile2) + L-lysine + ATP = lysidine(34) in tRNA(Ile2) + AMP + diphosphate + H(+). Its function is as follows. Ligates lysine onto the cytidine present at position 34 of the AUA codon-specific tRNA(Ile) that contains the anticodon CAU, in an ATP-dependent manner. Cytidine is converted to lysidine, thus changing the amino acid specificity of the tRNA from methionine to isoleucine. This chain is tRNA(Ile)-lysidine synthase, found in Clostridium perfringens (strain ATCC 13124 / DSM 756 / JCM 1290 / NCIMB 6125 / NCTC 8237 / Type A).